The chain runs to 1009 residues: C2 domain-containing protein aex-1 (1009 aa).

The region spanning 812–945 is the C2 domain; that stretch reads NAPHVDVHIS…ASEEKPTQRL (134 aa).

It belongs to the unc-13 family. In terms of tissue distribution, expressed in intestine, body wall muscles and some amphid neurons.

Involved in retrograde signaling from post-synaptic cells to pre-synaptic neurons, probably by regulating vesicle exocytosis in post-synaptic cells. Acts in muscles, to regulate the localization of synaptic vesicle fusion protein unc-13 likely during vesicle exocytosis and thus regulate retrograde signaling at the neuromuscular junction (NMJ). Regulates anterior body muscle contractions (aBOC) and the expulsion steps during the defecation motor program (DMP). Probably by regulating DMP, plays a homeostatic role in the uptake of triglycerides. Regulates locomotion. This is C2 domain-containing protein aex-1 from Caenorhabditis elegans.